A 555-amino-acid chain; its full sequence is WRKY transcription factor WRKY24 (555 aa).

2 disordered regions span residues 133-183 (TAPA…AGAN) and 197-248 (SEMA…CTFP). Over residues 163-183 (QQQQQPWGYQQQPAGMDAGAN) the composition is skewed to low complexity. Residues 214-278 (SQRRSSDDGY…YKGTHNHAKP (65 aa)) constitute a DNA-binding region (WRKY 1). Positions 253-259 (KKKVERS) match the Nuclear localization signal motif. Positions 270-365 (KGTHNHAKPQ…DGEGISMAGN (96 aa)) are disordered. Composition is skewed to polar residues over residues 277–294 (KPQNTRRNSGSSAAQVLQ) and 310–320 (TAATPENSSAS). Positions 347-356 (DSKRWRKDGD) are enriched in basic and acidic residues. The segment at residues 379 to 444 (SDIDILDDGY…YEGKHNHDVP (66 aa)) is a DNA-binding region (WRKY 2). The tract at residues 466–555 (HPYLPNQPPP…DDMFFQNSLY (90 aa)) is transcription repression of gibberellic acid (GA)-induced promoters. The interval 514–555 (FDDARGSYMSQHQQQQRQNDAMHASRAKEEPGDDMFFQNSLY) is disordered.

Belongs to the WRKY group II-a family. Expressed in aleurone cells. Mostly expressed in aleurone layers and leaves, and, to a lower extent, in roots, panicles and embryos.

It is found in the nucleus. Transcription activator. Interacts specifically with the W box (5'-(T)TGAC[CT]-3'), a frequently occurring elicitor-responsive cis-acting element. Negative regulator of both gibberellic acid (GA) and abscisic acid (ABA) signaling in aleurone cells, probably by interfering with GAM1, via the specific repression of GA- and ABA-induced promoters. The sequence is that of WRKY transcription factor WRKY24 from Oryza sativa subsp. japonica (Rice).